Here is a 595-residue protein sequence, read N- to C-terminus: Aspartate--tRNA ligase (595 aa).

Glu-173 lines the L-aspartate pocket. The segment at 197–200 (QLFK) is aspartate. Arg-219 lines the L-aspartate pocket. Residues 219–221 (RDE) and Gln-228 each bind ATP. His-449 is a binding site for L-aspartate. An ATP-binding site is contributed by Glu-483. Arg-490 is an L-aspartate binding site. 535–538 (GLDR) is an ATP binding site.

This sequence belongs to the class-II aminoacyl-tRNA synthetase family. Type 1 subfamily. Homodimer.

It is found in the cytoplasm. It catalyses the reaction tRNA(Asp) + L-aspartate + ATP = L-aspartyl-tRNA(Asp) + AMP + diphosphate. In terms of biological role, catalyzes the attachment of L-aspartate to tRNA(Asp) in a two-step reaction: L-aspartate is first activated by ATP to form Asp-AMP and then transferred to the acceptor end of tRNA(Asp). The protein is Aspartate--tRNA ligase of Shewanella sediminis (strain HAW-EB3).